We begin with the raw amino-acid sequence, 69 residues long: DNA-directed RNA polymerase subunit epsilon (69 aa).

The protein belongs to the RNA polymerase subunit epsilon family. As to quaternary structure, RNAP is composed of a core of 2 alpha, a beta and a beta' subunit. The core is associated with a delta subunit, and at least one of epsilon or omega. When a sigma factor is associated with the core the holoenzyme is formed, which can initiate transcription.

The catalysed reaction is RNA(n) + a ribonucleoside 5'-triphosphate = RNA(n+1) + diphosphate. Functionally, a non-essential component of RNA polymerase (RNAP). In Listeria welshimeri serovar 6b (strain ATCC 35897 / DSM 20650 / CCUG 15529 / CIP 8149 / NCTC 11857 / SLCC 5334 / V8), this protein is DNA-directed RNA polymerase subunit epsilon.